The following is a 1232-amino-acid chain: DNA-directed RNA polymerase subunit beta (1232 aa).

The tract at residues 1170–1232 (SVDEDADELE…LDLDDFGDEH (63 aa)) is disordered. Over residues 1171 to 1180 (VDEDADELEV) the composition is skewed to acidic residues. A compositionally biased stretch (basic and acidic residues) spans 1189–1198 (PEEKEEKEKE). The span at 1199-1232 (DSDEYDDLREEDVEPDLEELSLDDLDLDDFGDEH) shows a compositional bias: acidic residues.

Belongs to the RNA polymerase beta chain family. As to quaternary structure, the RNAP catalytic core consists of 2 alpha, 1 beta, 1 beta' and 1 omega subunit. When a sigma factor is associated with the core the holoenzyme is formed, which can initiate transcription.

It catalyses the reaction RNA(n) + a ribonucleoside 5'-triphosphate = RNA(n+1) + diphosphate. Its function is as follows. DNA-dependent RNA polymerase catalyzes the transcription of DNA into RNA using the four ribonucleoside triphosphates as substrates. This chain is DNA-directed RNA polymerase subunit beta, found in Clostridium botulinum (strain Okra / Type B1).